Consider the following 184-residue polypeptide: Large ribosomal subunit protein uL6 (184 aa).

This sequence belongs to the universal ribosomal protein uL6 family. In terms of assembly, part of the 50S ribosomal subunit.

Functionally, this protein binds to the 23S rRNA, and is important in its secondary structure. It is located near the subunit interface in the base of the L7/L12 stalk, and near the tRNA binding site of the peptidyltransferase center. The polypeptide is Large ribosomal subunit protein uL6 (Thermococcus gammatolerans (strain DSM 15229 / JCM 11827 / EJ3)).